A 249-amino-acid polypeptide reads, in one-letter code: Ribosomal RNA small subunit methyltransferase J (249 aa).

S-adenosyl-L-methionine contacts are provided by residues Arg-97–Asp-98, Glu-113–Arg-114, and Asp-167.

This sequence belongs to the methyltransferase superfamily. RsmJ family.

It is found in the cytoplasm. The catalysed reaction is guanosine(1516) in 16S rRNA + S-adenosyl-L-methionine = N(2)-methylguanosine(1516) in 16S rRNA + S-adenosyl-L-homocysteine + H(+). In terms of biological role, specifically methylates the guanosine in position 1516 of 16S rRNA. The protein is Ribosomal RNA small subunit methyltransferase J of Aeromonas salmonicida (strain A449).